Here is a 118-residue protein sequence, read N- to C-terminus: Large ribosomal subunit protein bL20 (118 aa).

The protein belongs to the bacterial ribosomal protein bL20 family.

Its function is as follows. Binds directly to 23S ribosomal RNA and is necessary for the in vitro assembly process of the 50S ribosomal subunit. It is not involved in the protein synthesizing functions of that subunit. This Nostoc punctiforme (strain ATCC 29133 / PCC 73102) protein is Large ribosomal subunit protein bL20.